The sequence spans 212 residues: Redox-sensing transcriptional repressor Rex (212 aa).

The segment at residues 17–56 (LYARSLRYLLEEGIHSVSSQELGERINVTAAQIRKDLSYF) is a DNA-binding region (H-T-H motif). 91-96 (GIGLLG) contacts NAD(+).

This sequence belongs to the transcriptional regulatory Rex family. As to quaternary structure, homodimer.

Its subcellular location is the cytoplasm. Functionally, modulates transcription in response to changes in cellular NADH/NAD(+) redox state. The polypeptide is Redox-sensing transcriptional repressor Rex (Chloroflexus aggregans (strain MD-66 / DSM 9485)).